We begin with the raw amino-acid sequence, 329 residues long: MTTGSNGPQDETPEPGTPGGPGPFSEEEIAAVTGPGPADELDELEAASIEEDSDEAPPDLETSFEKLLSKSRKLSTDRIRTVIESVLFVAERPLSVDELYMATGIERELIAEALNQLSGIHRDGISGIVLYEVAGGWQFRTDPHSGEYVRRYLRVKPQRLTRAAVETLAIIAYRQPVTRPEIEDIRGVDCGAVIKALMDRKLVKILGKREEVGRPILYGTSREFLEFFALKDLSALPTLREFHELTQEHREIVEKEDKPAPPAAGTVEALSDPAFTKRMEKSAAASEAALEDLEEAMAAADRTQKVSSSVLDTTPPEPETGDTTGPKPE.

3 disordered regions span residues 1-39, 252-274, and 286-329; these read MTTG…GPAD, IVEK…SDPA, and SEAA…PKPE.

It belongs to the ScpB family. Homodimer. Homodimerization may be required to stabilize the binding of ScpA to the Smc head domains. Component of the Structural Maintenance of Chromosome (SMC) condensin-like complex composed of ScpA, ScpB and the Smc homodimer. ScpA and ScpB bind to the head domain of Smc, the presence of the three proteins is required for the association of the complex with DNA.

It is found in the cytoplasm. Its function is as follows. A conditionally essential component of the chromosome segregation machinery. Required for chromosome condensation and partitioning. Important for positioning and anchoring of ParB-parS complexes (ori of replication) in the subpolar region, and of the ter replication site, as well as for segration of the ParB-parS complex and thus chromosome segregation. Probably acts via the formation of a condensin-like complex containing Smc, ScpA and ScpB that pulls DNA away from mid-cell into both cell halves. The polypeptide is Segregation and condensation protein B (Myxococcus xanthus (strain DK1622)).